Consider the following 2219-residue polypeptide: E3 ubiquitin-protein ligase Ubr3 (2219 aa).

Disordered stretches follow at residues 1-48 (MDED…DLSS) and 78-134 (AAGA…SALS). Basic and acidic residues predominate over residues 20 to 29 (VREQTHHPPM). The segment covering 31-42 (EDQELDNEDGSS) has biased composition (acidic residues). Residues 114 to 134 (GPTTTTSSGTAAESGAASALS) show a composition bias toward low complexity. The segment at 222 to 293 (AKCGLVWVPH…AEGFCSDHGI (72 aa)) adopts a UBR-type zinc-finger fold. Disordered regions lie at residues 1348–1367 (SFSL…TMDV) and 1440–1464 (QREK…KARE). A compositionally biased stretch (acidic residues) spans 1353–1367 (DGEDQSSDDDSTMDV). The segment at 1607 to 1643 (CGHHVHLSCLEAYLKTLYTTQRQPVQDRGEFYCPVCR) adopts an RING-type; degenerate zinc-finger fold. Disordered stretches follow at residues 1872–1902 (VGSD…QQQQ) and 1935–1954 (SAAA…HGAS). The span at 1877–1888 (SAAESQQQESAA) shows a compositional bias: low complexity.

The protein belongs to the E3 ubiquitin-protein ligase UBR1-like family. Selectively interacts (via UBR-type zinc finger) with the cleaved form of Diap1; this interaction is enhanced by tal. Interacts with tal and Rrp1. Interacts with ovo isoform B (via N-terminus). Interacts with Cad99C (via the cytoplasmic domain). Interacts with ck and Sans. Interacts with cos (via Kinesin motor domain). Post-translationally, in vitro, self-ubiquitination in the presence of E1, E2 and ubiquitin.

Its subcellular location is the cytoplasm. The protein localises to the nucleus. It catalyses the reaction S-ubiquitinyl-[E2 ubiquitin-conjugating enzyme]-L-cysteine + [acceptor protein]-L-lysine = [E2 ubiquitin-conjugating enzyme]-L-cysteine + N(6)-ubiquitinyl-[acceptor protein]-L-lysine.. It functions in the pathway protein modification; protein ubiquitination. E3 ubiquitin-protein ligase which is a component of the N-end rule pathway. Recognizes and binds to proteins bearing specific N-terminal residues, leading to their ubiquitination and subsequent degradation. Binds to the E3 ubiquitin-protein ligase Diap1 and enhances its ubiquitination and anti-apoptotic functions. Essential during trichome development for the ubiquitination of the N-terminus of ovo isoform B (svb), converting it from a transcriptional inhibitor to an activator. Positively regulates a hh-signaling pathway which functions in photoreceptor differentiation. Activation of hh up-regulates transcription of Ubr3, which in turn promotes hh signaling by mediating the ubiquitination and degradation of cos. Necessary for auditory transduction: plays a role in Johnston's organ organization by acting in the regulation of zip and ck function in scolopidial apical attachment. Likely to function by acting in a pathway that negatively regulates the ubiquitination of zip, consequently affecting its interaction with ck. May also negatively regulate a component of the SCF (SKP1-CUL1-F-box protein) E3 ubiquitin-protein ligase complex Cul1, which also appears to function in the negative regulation of the zip-ck interaction and scolopidial apical attachment. The sequence is that of E3 ubiquitin-protein ligase Ubr3 from Drosophila melanogaster (Fruit fly).